A 421-amino-acid chain; its full sequence is Forkhead box protein fkh-3 (421 aa).

A DNA-binding region (fork-head) is located at residues 118 to 218; the sequence is RPPISYVALC…SDADFDFFRK (101 aa).

The protein localises to the nucleus. In terms of biological role, transcription factor. Binds to DNA sequence motif 5'-CTGTTTCA-3'. Regulates expression of a class of small RNAs, known as 21U-RNAs, perhaps acting redundantly with fkh-4 and fkh-5. The protein is Forkhead box protein fkh-3 of Caenorhabditis elegans.